The primary structure comprises 336 residues: Ferrochelatase (336 aa).

Fe cation is bound by residues histidine 206 and glutamate 287.

The protein belongs to the ferrochelatase family.

Its subcellular location is the cytoplasm. It catalyses the reaction heme b + 2 H(+) = protoporphyrin IX + Fe(2+). Its pathway is porphyrin-containing compound metabolism; protoheme biosynthesis; protoheme from protoporphyrin-IX: step 1/1. In terms of biological role, catalyzes the ferrous insertion into protoporphyrin IX. This Neisseria meningitidis serogroup C / serotype 2a (strain ATCC 700532 / DSM 15464 / FAM18) protein is Ferrochelatase.